The following is a 2344-amino-acid chain: Peroxide stress-activated histidine kinase mak3 (2344 aa).

One can recognise a Protein kinase domain in the interval 1 to 295 (MYSQHELRNK…GIVNDLEACL (295 aa)). Phosphoserine is present on residues serine 12, serine 16, and serine 17. Residues 486 to 503 (SGNTRKTSLLGSNHSSYS) are compositionally biased toward polar residues. The disordered stretch occupies residues 486 to 506 (SGNTRKTSLLGSNHSSYSDKL). 2 TPR repeats span residues 829–862 (CHYL…IPHE) and 1340–1373 (AFAF…YAAL). The 52-residue stretch at 1730 to 1781 (FELEIRIKRKDGVYRWNLTRCTPTTNEKNRTSFLCATIDIDDQKKARATALE) folds into the PAC domain. Residues 1792–2018 (NISHELRTPF…TFKICYDLKI (227 aa)) enclose the Histidine kinase domain. Phosphohistidine; by autocatalysis is present on histidine 1795. A Response regulatory domain is found at 2211–2333 (KILIAEDNPI…TLIKMLLQYL (123 aa)). Residue aspartate 2263 is modified to 4-aspartylphosphate.

The protein localises to the cytoplasm. It catalyses the reaction ATP + protein L-histidine = ADP + protein N-phospho-L-histidine.. Involved in the control of the SAPK-dependent transcriptional response to peroxide stress. Regulates sty1 activity. The protein is Peroxide stress-activated histidine kinase mak3 (mak3) of Schizosaccharomyces pombe (strain 972 / ATCC 24843) (Fission yeast).